The sequence spans 492 residues: Bifunctional protein GlmU (492 aa).

The interval 1–241 (MIPENTGPAA…RWQVEGANDR (241 aa)) is pyrophosphorylase. UDP-N-acetyl-alpha-D-glucosamine contacts are provided by residues 14 to 17 (LAAG), K28, Q81, 86 to 87 (GT), 112 to 114 (YGD), G151, E166, N181, and N239. D114 lines the Mg(2+) pocket. A Mg(2+)-binding site is contributed by N239. Residues 242 to 262 (VQLAALGAELNRRTVEAWMRA) are linker. An N-acetyltransferase region spans residues 263 to 492 (GVTVVDPSTT…STPASTEEGK (230 aa)). UDP-N-acetyl-alpha-D-glucosamine-binding residues include R344 and K362. H374 (proton acceptor) is an active-site residue. Residues Y377 and N388 each contribute to the UDP-N-acetyl-alpha-D-glucosamine site. Acetyl-CoA contacts are provided by residues 397–398 (NY), S416, and A434. The interval 460–492 (WVPANRPGSRSAELAQAAINNSSSTPASTEEGK) is disordered. Over residues 477 to 492 (AINNSSSTPASTEEGK) the composition is skewed to polar residues.

In the N-terminal section; belongs to the N-acetylglucosamine-1-phosphate uridyltransferase family. The protein in the C-terminal section; belongs to the transferase hexapeptide repeat family. In terms of assembly, homotrimer. It depends on Mg(2+) as a cofactor.

It is found in the cytoplasm. The catalysed reaction is alpha-D-glucosamine 1-phosphate + acetyl-CoA = N-acetyl-alpha-D-glucosamine 1-phosphate + CoA + H(+). It catalyses the reaction N-acetyl-alpha-D-glucosamine 1-phosphate + UTP + H(+) = UDP-N-acetyl-alpha-D-glucosamine + diphosphate. Its pathway is nucleotide-sugar biosynthesis; UDP-N-acetyl-alpha-D-glucosamine biosynthesis; N-acetyl-alpha-D-glucosamine 1-phosphate from alpha-D-glucosamine 6-phosphate (route II): step 2/2. The protein operates within nucleotide-sugar biosynthesis; UDP-N-acetyl-alpha-D-glucosamine biosynthesis; UDP-N-acetyl-alpha-D-glucosamine from N-acetyl-alpha-D-glucosamine 1-phosphate: step 1/1. It functions in the pathway bacterial outer membrane biogenesis; LPS lipid A biosynthesis. In terms of biological role, catalyzes the last two sequential reactions in the de novo biosynthetic pathway for UDP-N-acetylglucosamine (UDP-GlcNAc). The C-terminal domain catalyzes the transfer of acetyl group from acetyl coenzyme A to glucosamine-1-phosphate (GlcN-1-P) to produce N-acetylglucosamine-1-phosphate (GlcNAc-1-P), which is converted into UDP-GlcNAc by the transfer of uridine 5-monophosphate (from uridine 5-triphosphate), a reaction catalyzed by the N-terminal domain. The sequence is that of Bifunctional protein GlmU from Pseudarthrobacter chlorophenolicus (strain ATCC 700700 / DSM 12829 / CIP 107037 / JCM 12360 / KCTC 9906 / NCIMB 13794 / A6) (Arthrobacter chlorophenolicus).